The following is a 264-amino-acid chain: 3-methyl-2-oxobutanoate hydroxymethyltransferase (264 aa).

Residues aspartate 45 and aspartate 84 each coordinate Mg(2+). Residues 45–46 (DS), aspartate 84, and lysine 113 each bind 3-methyl-2-oxobutanoate. Residue glutamate 115 participates in Mg(2+) binding. The active-site Proton acceptor is glutamate 182.

Belongs to the PanB family. Homodecamer; pentamer of dimers. The cofactor is Mg(2+).

It localises to the cytoplasm. It carries out the reaction 3-methyl-2-oxobutanoate + (6R)-5,10-methylene-5,6,7,8-tetrahydrofolate + H2O = 2-dehydropantoate + (6S)-5,6,7,8-tetrahydrofolate. It participates in cofactor biosynthesis; (R)-pantothenate biosynthesis; (R)-pantoate from 3-methyl-2-oxobutanoate: step 1/2. In terms of biological role, catalyzes the reversible reaction in which hydroxymethyl group from 5,10-methylenetetrahydrofolate is transferred onto alpha-ketoisovalerate to form ketopantoate. The sequence is that of 3-methyl-2-oxobutanoate hydroxymethyltransferase from Caldicellulosiruptor saccharolyticus (strain ATCC 43494 / DSM 8903 / Tp8T 6331).